A 173-amino-acid polypeptide reads, in one-letter code: dCTP deaminase, dUMP-forming (173 aa).

DCTP-binding positions include 93-98 (RSSIGR), Asp-111, 119-121 (TLE), Gln-138, and Tyr-151. The active-site Proton donor/acceptor is the Glu-121.

It belongs to the dCTP deaminase family. In terms of assembly, homotrimer.

It carries out the reaction dCTP + 2 H2O = dUMP + NH4(+) + diphosphate. It functions in the pathway pyrimidine metabolism; dUMP biosynthesis; dUMP from dCTP: step 1/1. Its function is as follows. Bifunctional enzyme that catalyzes both the deamination of dCTP to dUTP and the hydrolysis of dUTP to dUMP without releasing the toxic dUTP intermediate. The sequence is that of dCTP deaminase, dUMP-forming from Clostridium acetobutylicum (strain ATCC 824 / DSM 792 / JCM 1419 / IAM 19013 / LMG 5710 / NBRC 13948 / NRRL B-527 / VKM B-1787 / 2291 / W).